A 395-amino-acid chain; its full sequence is Carbohydrate sulfotransferase 6 (395 aa).

At 1-5 (MWLPR) the chain is on the cytoplasmic side. Residues 6 to 26 (VSSTAVTALLLAQTFLLLFLV) form a helical; Signal-anchor for type II membrane protein membrane-spanning segment. The Lumenal segment spans residues 27–395 (SRPGPSSPAG…ASSTASHPRN (369 aa)). Residue 49–55 (WRSGSSF) coordinates 3'-phosphoadenylyl sulfate. An N-linked (GlcNAc...) asparagine glycan is attached at Asn116. 202–210 (RDPRAVLRS) lines the 3'-phosphoadenylyl sulfate pocket. Residues Asn229, Asn305, and Asn328 are each glycosylated (N-linked (GlcNAc...) asparagine).

The protein belongs to the sulfotransferase 1 family. Gal/GlcNAc/GalNAc subfamily. Expressed in cornea. Mainly expressed in brain. Also expressed in spinal cord and trachea.

It localises to the golgi apparatus membrane. The enzyme catalyses 3'-phosphoadenylyl sulfate + keratan = adenosine 3',5'-bisphosphate + keratan 6'-sulfate.. Sulfotransferase that utilizes 3'-phospho-5'-adenylyl sulfate (PAPS) as sulfonate donor to catalyze the transfer of sulfate to position 6 of non-reducing N-acetylglucosamine (GlcNAc) residues of keratan. Cooperates with B4GALT4 galactosyltransferase and B3GNT7 N-acetylglucosaminyltransferase to construct and elongate the sulfated disaccharide unit [-&gt;3Galbeta1-&gt;4(6-sulfoGlcNAcbeta)1-&gt;] within keratan sulfate polymer. Involved in biosynthesis of keratan sulfate in cornea, with an impact on proteoglycan fibril organization and corneal transparency. Involved in sulfation of endothelial mucins such as GLYCAM1. The polypeptide is Carbohydrate sulfotransferase 6 (Homo sapiens (Human)).